Reading from the N-terminus, the 304-residue chain is MVDGWIILDKPLELGSTQGVAAVKRNLRQAGYGKCKVGHGGTLDPLATGVLPIAVGEATKLCGRMLDASKVYAFTVAFGTETDSLDLEGGIVATSDVRPPLADVHVTLGAFRDSIDQVPPAYSALMVEGRRAYDLARAGETVELPSRRVTIHALTLDSWTGSEGAVETATLTAHVSKGTYIRSLARDIARALGTVGHVTMLRRLKAGPFAIEQAISLDKLNALGQGAPLEHVLLPLEAGLVDIPALDLDPEQARAVRQGRVLTGLPFEDGLYWARLGTVPVALVELSDGNLKVSRGFNLQDVAE.

The Nucleophile role is filled by D44.

This sequence belongs to the pseudouridine synthase TruB family. Type 1 subfamily.

It carries out the reaction uridine(55) in tRNA = pseudouridine(55) in tRNA. Its function is as follows. Responsible for synthesis of pseudouridine from uracil-55 in the psi GC loop of transfer RNAs. In Novosphingobium aromaticivorans (strain ATCC 700278 / DSM 12444 / CCUG 56034 / CIP 105152 / NBRC 16084 / F199), this protein is tRNA pseudouridine synthase B.